A 199-amino-acid chain; its full sequence is Fe/S biogenesis protein NfuA (199 aa).

[4Fe-4S] cluster contacts are provided by C151 and C154.

Belongs to the NfuA family. In terms of assembly, homodimer. The cofactor is [4Fe-4S] cluster.

Involved in iron-sulfur cluster biogenesis. Binds a 4Fe-4S cluster, can transfer this cluster to apoproteins, and thereby intervenes in the maturation of Fe/S proteins. Could also act as a scaffold/chaperone for damaged Fe/S proteins. The chain is Fe/S biogenesis protein NfuA from Xanthomonas oryzae pv. oryzae (strain PXO99A).